A 260-amino-acid polypeptide reads, in one-letter code: Triosephosphate isomerase (260 aa).

Residue 11-13 participates in substrate binding; it reads NWK. The Electrophile role is filled by histidine 103. Catalysis depends on glutamate 175, which acts as the Proton acceptor. Residues glycine 181, serine 220, and 241 to 242 each bind substrate; that span reads GG.

Belongs to the triosephosphate isomerase family. As to quaternary structure, homodimer.

The protein localises to the cytoplasm. The catalysed reaction is D-glyceraldehyde 3-phosphate = dihydroxyacetone phosphate. It participates in carbohydrate biosynthesis; gluconeogenesis. The protein operates within carbohydrate degradation; glycolysis; D-glyceraldehyde 3-phosphate from glycerone phosphate: step 1/1. Functionally, involved in the gluconeogenesis. Catalyzes stereospecifically the conversion of dihydroxyacetone phosphate (DHAP) to D-glyceraldehyde-3-phosphate (G3P). This chain is Triosephosphate isomerase, found in Shewanella piezotolerans (strain WP3 / JCM 13877).